We begin with the raw amino-acid sequence, 127 residues long: Multiple antibiotic resistance protein MarA (127 aa).

The HTH araC/xylS-type domain occupies histidine 12–threonine 110. 2 consecutive DNA-binding regions (H-T-H motif) follow at residues glutamate 29–threonine 50 and isoleucine 77–phenylalanine 100.

In terms of assembly, monomer.

Functionally, may be a transcriptional activator of genes involved in the multiple antibiotic resistance (Mar) phenotype. It can also activate genes such as sodA, zwf and micF. The protein is Multiple antibiotic resistance protein MarA (marA) of Escherichia coli (strain K12).